We begin with the raw amino-acid sequence, 507 residues long: ATP synthase subunit alpha (507 aa).

168–175 contributes to the ATP binding site; it reads GDRQTGKT.

Belongs to the ATPase alpha/beta chains family. F-type ATPases have 2 components, CF(1) - the catalytic core - and CF(0) - the membrane proton channel. CF(1) has five subunits: alpha(3), beta(3), gamma(1), delta(1), epsilon(1). CF(0) has three main subunits: a(1), b(2) and c(9-12). The alpha and beta chains form an alternating ring which encloses part of the gamma chain. CF(1) is attached to CF(0) by a central stalk formed by the gamma and epsilon chains, while a peripheral stalk is formed by the delta and b chains.

It is found in the cell membrane. It catalyses the reaction ATP + H2O + 4 H(+)(in) = ADP + phosphate + 5 H(+)(out). Functionally, produces ATP from ADP in the presence of a proton gradient across the membrane. The alpha chain is a regulatory subunit. The protein is ATP synthase subunit alpha of Mesomycoplasma hyopneumoniae (strain 232) (Mycoplasma hyopneumoniae).